Consider the following 253-residue polypeptide: Indole-3-glycerol phosphate synthase (253 aa).

This sequence belongs to the TrpC family.

The catalysed reaction is 1-(2-carboxyphenylamino)-1-deoxy-D-ribulose 5-phosphate + H(+) = (1S,2R)-1-C-(indol-3-yl)glycerol 3-phosphate + CO2 + H2O. Its pathway is amino-acid biosynthesis; L-tryptophan biosynthesis; L-tryptophan from chorismate: step 4/5. This chain is Indole-3-glycerol phosphate synthase, found in Bacillus cereus (strain B4264).